The sequence spans 262 residues: Small ribosomal subunit protein eS1 (262 aa).

Belongs to the eukaryotic ribosomal protein eS1 family. In terms of assembly, component of the small ribosomal subunit. Mature ribosomes consist of a small (40S) and a large (60S) subunit. The 40S subunit contains about 32 different proteins and 1 molecule of RNA (18S). The 60S subunit contains about 42 different proteins and 3 molecules of RNA (28S, 5.8S and 5S).

It localises to the cytoplasm. In terms of biological role, component of the ribosome, a large ribonucleoprotein complex responsible for the synthesis of proteins in the cell. The small ribosomal subunit (SSU) binds messenger RNAs (mRNAs) and translates the encoded message by selecting cognate aminoacyl-transfer RNA (tRNA) molecules. The large subunit (LSU) contains the ribosomal catalytic site termed the peptidyl transferase center (PTC), which catalyzes the formation of peptide bonds, thereby polymerizing the amino acids delivered by tRNAs into a polypeptide chain. The nascent polypeptides leave the ribosome through a tunnel in the LSU and interact with protein factors that function in enzymatic processing, targeting, and the membrane insertion of nascent chains at the exit of the ribosomal tunnel. In Plasmodium falciparum (isolate 3D7), this protein is Small ribosomal subunit protein eS1.